The following is a 1272-amino-acid chain: RING finger protein PFE0100w (1272 aa).

The interval 216–260 (INKINDVSNNDPKKDNNEKNTSSNNITHNNYNDISNNNNNNNNIN) is disordered. Residues 234-260 (KNTSSNNITHNNYNDISNNNNNNNNIN) show a composition bias toward low complexity. The CHCR repeat unit spans residues 608-752 (YIQTINYLET…GYKFIKYYPQ (145 aa)). Residues 771–791 (IFIPLFLDNIDFLFMFIVKFL) traverse the membrane as a helical segment. 2 disordered regions span residues 842–862 (NQNH…NNSQ) and 908–970 (ENQT…IINK). Composition is skewed to low complexity over residues 850–861 (SDSHNLSDDNNS) and 909–956 (NQTN…IQTN). Positions 957–967 (KQKGNSTTNKI) are enriched in polar residues. The stretch at 1146–1182 (MNDMNKNINDKCIEIEKDKKELEKIKKKQLKKKYNFY) forms a coiled coil. The RING-type; atypical zinc finger occupies 1189-1224 (CSICKEILSVPMIHFLCKHSYHSYCLKDNNVCILCH).

The protein resides in the membrane. In Plasmodium falciparum (isolate 3D7), this protein is RING finger protein PFE0100w.